Here is a 201-residue protein sequence, read N- to C-terminus: Glycerol-3-phosphate acyltransferase (201 aa).

A run of 6 helical transmembrane segments spans residues 3–23, 51–71, 85–105, 116–136, 137–157, and 158–178; these read TVLF…VVVS, KAAI…VWLV, VALV…FRFV, VLLA…LVIA, YAFR…PFYY, and GLLF…ILLV.

It belongs to the PlsY family. As to quaternary structure, probably interacts with PlsX.

It localises to the cell inner membrane. It carries out the reaction an acyl phosphate + sn-glycerol 3-phosphate = a 1-acyl-sn-glycero-3-phosphate + phosphate. The protein operates within lipid metabolism; phospholipid metabolism. In terms of biological role, catalyzes the transfer of an acyl group from acyl-phosphate (acyl-PO(4)) to glycerol-3-phosphate (G3P) to form lysophosphatidic acid (LPA). This enzyme utilizes acyl-phosphate as fatty acyl donor, but not acyl-CoA or acyl-ACP. The chain is Glycerol-3-phosphate acyltransferase from Janthinobacterium sp. (strain Marseille) (Minibacterium massiliensis).